The primary structure comprises 60 residues: MSKSLVPEAKNGLSKFKNEVARELGVPFSDYNGDLSSRQCGSVGGEMVKRMVEAYESQIK.

It belongs to the alpha/beta-type SASP family. In terms of processing, SASP are degraded in the first minutes of spore germination and provide amino acids for both new protein synthesis and metabolism.

Functionally, SASP are bound to spore DNA. They are double-stranded DNA-binding proteins that cause DNA to change to an a-like conformation. They protect the DNA backbone from chemical and enzymatic cleavage and are thus involved in dormant spore's high resistance to UV light. The chain is Small, acid-soluble spore protein 1 (ssp1) from Clostridium perfringens (strain 13 / Type A).